Consider the following 1183-residue polypeptide: DNA-directed RNA polymerase subunit beta' (1183 aa).

Zn(2+)-binding residues include C60, C62, C75, and C78. Mg(2+)-binding residues include D449, D451, and D453. Residues C794, C867, C874, and C877 each coordinate Zn(2+).

The protein belongs to the RNA polymerase beta' chain family. The RNAP catalytic core consists of 2 alpha, 1 beta, 1 beta' and 1 omega subunit. When a sigma factor is associated with the core the holoenzyme is formed, which can initiate transcription. Mg(2+) is required as a cofactor. Zn(2+) serves as cofactor.

The enzyme catalyses RNA(n) + a ribonucleoside 5'-triphosphate = RNA(n+1) + diphosphate. Functionally, DNA-dependent RNA polymerase catalyzes the transcription of DNA into RNA using the four ribonucleoside triphosphates as substrates. This chain is DNA-directed RNA polymerase subunit beta', found in Caldanaerobacter subterraneus subsp. tengcongensis (strain DSM 15242 / JCM 11007 / NBRC 100824 / MB4) (Thermoanaerobacter tengcongensis).